Here is a 74-residue protein sequence, read N- to C-terminus: Putative membrane protein insertion efficiency factor (74 aa).

The protein belongs to the UPF0161 family.

Its subcellular location is the cell inner membrane. Could be involved in insertion of integral membrane proteins into the membrane. The sequence is that of Putative membrane protein insertion efficiency factor from Syntrophus aciditrophicus (strain SB).